The following is a 223-amino-acid chain: Deoxyribose-phosphate aldolase (223 aa).

Catalysis depends on Asp-91, which acts as the Proton donor/acceptor. The active-site Schiff-base intermediate with acetaldehyde is Lys-153. Lys-182 (proton donor/acceptor) is an active-site residue.

It belongs to the DeoC/FbaB aldolase family. DeoC type 1 subfamily.

The protein resides in the cytoplasm. The enzyme catalyses 2-deoxy-D-ribose 5-phosphate = D-glyceraldehyde 3-phosphate + acetaldehyde. The protein operates within carbohydrate degradation; 2-deoxy-D-ribose 1-phosphate degradation; D-glyceraldehyde 3-phosphate and acetaldehyde from 2-deoxy-alpha-D-ribose 1-phosphate: step 2/2. Its function is as follows. Catalyzes a reversible aldol reaction between acetaldehyde and D-glyceraldehyde 3-phosphate to generate 2-deoxy-D-ribose 5-phosphate. This is Deoxyribose-phosphate aldolase from Yersinia pestis bv. Antiqua (strain Angola).